Here is a 461-residue protein sequence, read N- to C-terminus: Phosphoenolpyruvate carboxylase (461 aa).

The protein belongs to the PEPCase type 2 family. In terms of assembly, homotetramer. The cofactor is Mg(2+).

The catalysed reaction is oxaloacetate + phosphate = phosphoenolpyruvate + hydrogencarbonate. Catalyzes the irreversible beta-carboxylation of phosphoenolpyruvate (PEP) to form oxaloacetate (OAA), a four-carbon dicarboxylic acid source for the tricarboxylic acid cycle. The polypeptide is Phosphoenolpyruvate carboxylase (Pyrobaculum islandicum (strain DSM 4184 / JCM 9189 / GEO3)).